A 249-amino-acid chain; its full sequence is ATP synthase subunit a (249 aa).

6 helical membrane passes run 26–46, 84–104, 114–134, 143–163, 185–205, and 208–228; these read FTNV…FLYL, FFPF…IGLF, IIVT…YGFF, LFVP…IEII, ITLK…ALGI, and AVLP…VAFL.

This sequence belongs to the ATPase A chain family. In terms of assembly, F-type ATPases have 2 components, CF(1) - the catalytic core - and CF(0) - the membrane proton channel. CF(1) has five subunits: alpha(3), beta(3), gamma(1), delta(1), epsilon(1). CF(0) has three main subunits: a(1), b(2) and c(9-12). The alpha and beta chains form an alternating ring which encloses part of the gamma chain. CF(1) is attached to CF(0) by a central stalk formed by the gamma and epsilon chains, while a peripheral stalk is formed by the delta and b chains.

It is found in the cell inner membrane. In terms of biological role, key component of the proton channel; it plays a direct role in the translocation of protons across the membrane. This chain is ATP synthase subunit a, found in Brucella canis (strain ATCC 23365 / NCTC 10854 / RM-666).